The following is a 690-amino-acid chain: Eukaryotic translation initiation factor 3 subunit B (690 aa).

Basic and acidic residues predominate over residues 1–11; sequence MAKKKSEEHSG. The tract at residues 1-33 is disordered; the sequence is MAKKKSEEHSGADANDSDYNEEPNFDDPPGYVD. The span at 15–25 shows a compositional bias: acidic residues; sequence NDSDYNEEPNF. In terms of domain architecture, RRM spans 57 to 141; it reads SVVVVDNMPK…YTFAVNLFTD (85 aa). 5 WD repeats span residues 207–246, 292–331, 334–369, 442–484, and 530–575; these read TRER…KIQK, GDGM…LLDL, IKIA…TLME, EIRE…KPSL, and PDHF…IRRT. Residues 613-646 are a coiled coil; sequence EQKDRLRLTRASKELLEKRAQLRETFMEYRNKRI.

This sequence belongs to the eIF-3 subunit B family. Component of the eukaryotic translation initiation factor 3 (eIF-3) complex. The eIF-3 complex interacts with pix. Interacts with mxt.

It localises to the cytoplasm. Its function is as follows. RNA-binding component of the eukaryotic translation initiation factor 3 (eIF-3) complex, which is involved in protein synthesis of a specialized repertoire of mRNAs and, together with other initiation factors, stimulates binding of mRNA and methionyl-tRNAi to the 40S ribosome. The eIF-3 complex specifically targets and initiates translation of a subset of mRNAs involved in cell proliferation. The chain is Eukaryotic translation initiation factor 3 subunit B from Drosophila mojavensis (Fruit fly).